Reading from the N-terminus, the 386-residue chain is Bifunctional chorismate mutase/prephenate dehydratase (386 aa).

In terms of domain architecture, Chorismate mutase spans 1–92 (MTSENPLLAL…DSVLTQQALL (92 aa)). Substrate is bound by residues R11, R28, K39, D48, E52, S84, and Q88. Residues 105-285 (RIAFLGPKGS…NFTRFVVLAR (181 aa)) enclose the Prephenate dehydratase domain. Residues 299-376 (TLLMATGQQA…RSMKVLGCYP (78 aa)) form the ACT domain.

The protein resides in the cytoplasm. It carries out the reaction chorismate = prephenate. It catalyses the reaction prephenate + H(+) = 3-phenylpyruvate + CO2 + H2O. It participates in amino-acid biosynthesis; L-phenylalanine biosynthesis; phenylpyruvate from prephenate: step 1/1. It functions in the pathway metabolic intermediate biosynthesis; prephenate biosynthesis; prephenate from chorismate: step 1/1. Catalyzes the Claisen rearrangement of chorismate to prephenate and the decarboxylation/dehydration of prephenate to phenylpyruvate. The protein is Bifunctional chorismate mutase/prephenate dehydratase (pheA) of Escherichia coli O157:H7.